Here is a 251-residue protein sequence, read N- to C-terminus: Coproheme decarboxylase (251 aa).

Residues Arg133, 147–151 (YPMSK), His174, Gln187, and Ser225 contribute to the Fe-coproporphyrin III site. Residue Tyr147 is part of the active site.

Belongs to the ChdC family. Type 1 subfamily. Homopentamer. Homohexamer in solution. It depends on Fe-coproporphyrin III as a cofactor.

It catalyses the reaction Fe-coproporphyrin III + 2 H2O2 + 2 H(+) = heme b + 2 CO2 + 4 H2O. It carries out the reaction Fe-coproporphyrin III + H2O2 + H(+) = harderoheme III + CO2 + 2 H2O. The enzyme catalyses harderoheme III + H2O2 + H(+) = heme b + CO2 + 2 H2O. Its pathway is porphyrin-containing compound metabolism; protoheme biosynthesis. In terms of biological role, involved in coproporphyrin-dependent heme b biosynthesis. Catalyzes the decarboxylation of Fe-coproporphyrin III (coproheme) to heme b (protoheme IX), the last step of the pathway. The reaction occurs in a stepwise manner with a three-propionate intermediate. The protein is Coproheme decarboxylase of Listeria monocytogenes serovar 1/2a (strain ATCC BAA-679 / EGD-e).